The following is a 196-amino-acid chain: MPFVVVITGIPGVGKSTITRLALQRTRAKFRVVNFGDIMFQEAVKAGWVSHRDEVRKLSLKVQRELQLKAAQRILEISQKEPVLLDTHATIKTPLGYMLGFPREVIEVINPRFMVIIEANPSEILGRRLRDLKRDRDVETEDQIQRHQDLNRAATISYAMHSNALIKIIENHEDKGLEEAVNELVKILDLAVNEDA.

9–17 (GIPGVGKST) is a binding site for ATP.

Belongs to the archaeal adenylate kinase family.

It localises to the cytoplasm. The enzyme catalyses AMP + ATP = 2 ADP. The protein is Adenylate kinase of Thermococcus sibiricus (strain DSM 12597 / MM 739).